A 341-amino-acid polypeptide reads, in one-letter code: Inositol 2-dehydrogenase (341 aa).

The protein belongs to the Gfo/Idh/MocA family. Homotetramer.

It carries out the reaction myo-inositol + NAD(+) = scyllo-inosose + NADH + H(+). In terms of biological role, involved in the oxidation of myo-inositol (MI) to 2-keto-myo-inositol (2KMI or 2-inosose). The polypeptide is Inositol 2-dehydrogenase (Acidothermus cellulolyticus (strain ATCC 43068 / DSM 8971 / 11B)).